We begin with the raw amino-acid sequence, 476 residues long: Acidic leucine-rich nuclear phosphoprotein 32-related protein 1 (476 aa).

3 LRR repeats span residues 51-72 (SLEH…PRLR), 73-92 (NLTR…DHLV), and 98-119 (SLRD…SPLA). Residues 131-169 (CPVTRVKDYRSKVFGMIRTLKYLDKMDADENERPESDDD) enclose the LRRCT domain. The tract at residues 157–476 (DADENERPES…VEDLRPFKHH (320 aa)) is disordered. Acidic residues-rich tracts occupy residues 165 to 194 (ESDD…EDPG), 222 to 232 (DVDEDESDADE), 252 to 289 (GDED…EDAV), 299 to 329 (SDEE…EAEP), 353 to 371 (EGED…EERL), 379 to 396 (EGND…EDTE), 415 to 436 (DAAE…DDGG), and 458 to 467 (GDDDEDDDGV).

It belongs to the ANP32 family.

The chain is Acidic leucine-rich nuclear phosphoprotein 32-related protein 1 from Oryza sativa subsp. japonica (Rice).